We begin with the raw amino-acid sequence, 343 residues long: Dihydroorotate dehydrogenase (quinone) (343 aa).

FMN-binding positions include 61-65 (AGLDK) and T85. K65 serves as a coordination point for substrate. 110-114 (NRMGF) contributes to the substrate binding site. N138 and N171 together coordinate FMN. N171 serves as a coordination point for substrate. The active-site Nucleophile is S174. N176 is a substrate binding site. K216 and T244 together coordinate FMN. 245–246 (NT) lines the substrate pocket. FMN-binding positions include G267, G296, and 317-318 (YS).

This sequence belongs to the dihydroorotate dehydrogenase family. Type 2 subfamily. As to quaternary structure, monomer. Requires FMN as cofactor.

It localises to the cell membrane. It catalyses the reaction (S)-dihydroorotate + a quinone = orotate + a quinol. It functions in the pathway pyrimidine metabolism; UMP biosynthesis via de novo pathway; orotate from (S)-dihydroorotate (quinone route): step 1/1. Functionally, catalyzes the conversion of dihydroorotate to orotate with quinone as electron acceptor. The chain is Dihydroorotate dehydrogenase (quinone) from Pseudomonas syringae pv. tomato (strain ATCC BAA-871 / DC3000).